A 692-amino-acid polypeptide reads, in one-letter code: MGERGELVSDLHPSDDHDADPRLAPLLAWRQQLVDSGAVAPRSFKEAHLRLVLRSGRTDVEQIRAMLPGSVAEHAEEMARILAELTPAAPEPDPPPVPEPQPEPEPGPGKHRSPETDEPPVATTTEIPIPTTGFAPFQFSSQQVALHDITVQRTDAAVELSWPPYEAPEDEAAQDISVVMYRVVSSDDQAPYSPDPAHLVALTEEPKATDERQQVSPVRHYQVWVNVGASEAAARKTQPVLYATAVLVRPVTGFEIREDAGWVIGQWTAPPGVTAVHVFRVPIDEVDRDEAQYRILTAGENLAGFVDTEPVRGQRYRYRARCAVNVDGVVRLSEAAEADVELAAALMPVTDLVVETAADGASCDLSWTPPAGGQVAIYRSQNGPSADAEAIELPQGALEQVGLTPELRVTQDLTEETGSDGRRRARLTGVTWPSEWSRAYFTPVTLMGERAMLGRTLSSVRTGTIRDIELAEYCNKQVLTFDWPDGAASVIVYLAPKGHDPRSGLNGRSFEISLEEYERYGGMHLTGQLPVGGCSLHLAPVAFAGGRRVVGAFSSIEYRGLLRLQYAVRIGRDPNGFPTTATIALRAEQNVPGSPGFVLVNNPQRLPLSVHDGHPVDVAPLDARGQLADHPSKELRWSALTTSGDGELWAANLSGLQGWIRLFVNIGSPAQLRVIALLDPPVETLRLTAATL.

The span at 1-21 shows a compositional bias: basic and acidic residues; it reads MGERGELVSDLHPSDDHDADP. 2 disordered regions span residues 1–23 and 87–134; these read MGER…DPRL and PAAP…TTGF. Residues 89 to 107 are compositionally biased toward pro residues; it reads APEPDPPPVPEPQPEPEPG.

Its subcellular location is the cytoplasm. May be involved in assembly of the ESX-1 / type VII specialized secretion system (T7SS), which exports several proteins including EsxA and EsxB. Involved in DNA conjugation in recipient (MKD8) but not donor (mc(2)155) strain. In Mycolicibacterium smegmatis (strain ATCC 700084 / mc(2)155) (Mycobacterium smegmatis), this protein is Putative ESX-1 scaffolding and assembly protein SaeA.